The chain runs to 297 residues: Ribonuclease HIII (297 aa).

The region spanning 81-297 (IPIIGTDEVG…NTKKAQALLK (217 aa)) is the RNase H type-2 domain. The a divalent metal cation site is built by D87, E88, and D192.

The protein belongs to the RNase HII family. RnhC subfamily. The cofactor is Mn(2+). Requires Mg(2+) as cofactor.

It localises to the cytoplasm. It carries out the reaction Endonucleolytic cleavage to 5'-phosphomonoester.. Its function is as follows. Endonuclease that specifically degrades the RNA of RNA-DNA hybrids. The sequence is that of Ribonuclease HIII from Streptococcus agalactiae serotype Ia (strain ATCC 27591 / A909 / CDC SS700).